We begin with the raw amino-acid sequence, 72 residues long: Mitotic-spindle organizing protein 1 (72 aa).

This sequence belongs to the MOZART1 family. As to quaternary structure, part of the gamma-tubulin complex.

The protein localises to the cytoplasm. It localises to the cytoskeleton. It is found in the microtubule organizing center. The protein resides in the spindle pole body. Its function is as follows. Required for gamma-tubulin complex recruitment to the microtubule organizing center (MTOC). The chain is Mitotic-spindle organizing protein 1 from Cryptococcus neoformans var. neoformans serotype D (strain B-3501A) (Filobasidiella neoformans).